Consider the following 134-residue polypeptide: Retinol-binding protein 2 (134 aa).

K41 and Q109 together coordinate all-trans-retinol.

It belongs to the calycin superfamily. Fatty-acid binding protein (FABP) family.

Its subcellular location is the cytoplasm. Functionally, intracellular transport of retinol. This Sus scrofa (Pig) protein is Retinol-binding protein 2 (RBP2).